The sequence spans 127 residues: Large ribosomal subunit protein bL12 (127 aa).

Belongs to the bacterial ribosomal protein bL12 family. Homodimer. Part of the ribosomal stalk of the 50S ribosomal subunit. Forms a multimeric L10(L12)X complex, where L10 forms an elongated spine to which 2 to 4 L12 dimers bind in a sequential fashion. Binds GTP-bound translation factors.

Functionally, forms part of the ribosomal stalk which helps the ribosome interact with GTP-bound translation factors. Is thus essential for accurate translation. The protein is Large ribosomal subunit protein bL12 of Rhizobium etli (strain ATCC 51251 / DSM 11541 / JCM 21823 / NBRC 15573 / CFN 42).